We begin with the raw amino-acid sequence, 368 residues long: Ribosomal RNA large subunit methyltransferase M (368 aa).

Residues serine 199, 232-235 (APGG), aspartate 251, aspartate 271, and aspartate 287 each bind S-adenosyl-L-methionine. Residue lysine 316 is the Proton acceptor of the active site.

Belongs to the class I-like SAM-binding methyltransferase superfamily. RNA methyltransferase RlmE family. RlmM subfamily. Monomer.

It localises to the cytoplasm. The catalysed reaction is cytidine(2498) in 23S rRNA + S-adenosyl-L-methionine = 2'-O-methylcytidine(2498) in 23S rRNA + S-adenosyl-L-homocysteine + H(+). In terms of biological role, catalyzes the 2'-O-methylation at nucleotide C2498 in 23S rRNA. This chain is Ribosomal RNA large subunit methyltransferase M, found in Aromatoleum aromaticum (strain DSM 19018 / LMG 30748 / EbN1) (Azoarcus sp. (strain EbN1)).